The sequence spans 494 residues: uncharacterized protein (494 aa).

VOC domains lie at 18–174 (FIDC…FINR) and 229–408 (SLDH…FGIL). Fe cation-binding residues include His-232, His-349, and Glu-460.

This sequence belongs to the 4HPPD family. Fe cation is required as a cofactor.

May have dioxygenase activity. This is an uncharacterized protein from Dictyostelium discoideum (Social amoeba).